The following is a 139-amino-acid chain: MSSAGVPHTDLWPLLLYFELVLVVVGTMLALPPFLGERRTRRTPATEQPYESGIVAVGSSQLRFSVRFYLIAIFFVIFDLEAVFIFAWAIAFRESGWPGYIEILIFIGVLVATLVYLWRIGALDWRTPRQRSIEATIHQ.

3 consecutive transmembrane segments (helical) span residues 11–31 (LWPLLLYFELVLVVVGTMLAL), 70–90 (LIAIFFVIFDLEAVFIFAWAI), and 97–117 (WPGYIEILIFIGVLVATLVYL).

This sequence belongs to the complex I subunit 3 family. As to quaternary structure, NDH-1 is composed of 14 different subunits. Subunits NuoA, H, J, K, L, M, N constitute the membrane sector of the complex.

Its subcellular location is the cell inner membrane. The enzyme catalyses a quinone + NADH + 5 H(+)(in) = a quinol + NAD(+) + 4 H(+)(out). NDH-1 shuttles electrons from NADH, via FMN and iron-sulfur (Fe-S) centers, to quinones in the respiratory chain. The immediate electron acceptor for the enzyme in this species is believed to be ubiquinone. Couples the redox reaction to proton translocation (for every two electrons transferred, four hydrogen ions are translocated across the cytoplasmic membrane), and thus conserves the redox energy in a proton gradient. The sequence is that of NADH-quinone oxidoreductase subunit A from Methylococcus capsulatus (strain ATCC 33009 / NCIMB 11132 / Bath).